Reading from the N-terminus, the 1556-residue chain is uncharacterized protein (1556 aa).

Ser2 carries the N-acetylserine modification. The span at 145–156 shows a compositional bias: basic and acidic residues; it reads NQLENRKSLERK. Residues 145-170 are disordered; it reads NQLENRKSLERKPSRKRRKKNSNVND. Residues 378-583 form the Helicase ATP-binding domain; sequence SGDYPVCAKG…MIMSYLKLHP (206 aa). Residue 391-398 participates in ATP binding; that stretch reads EEMGLGKT. At Ser810 the chain carries Phosphoserine. Positions 810 to 850 are disordered; that stretch reads SEDEDEHMDERFGEKETSSGDESDREINGAKNHDNHNNDGM. 2 stretches are compositionally biased toward basic and acidic residues: residues 817-827 and 834-846; these read MDERFGEKETS and REIN…DNHN. The RING-type zinc-finger motif lies at 1239–1277; the sequence is CSICLGEVEIGAIIKCGHYFCKSCILTWLRAHSKCPICK. Basic and acidic residues predominate over residues 1297–1309; the sequence is REKEIQEPRREGA. Disordered regions lie at residues 1297 to 1319 and 1508 to 1534; these read REKE…SNEN and EKSK…AKFE. Positions 1310–1319 are enriched in low complexity; that stretch reads DSSQDNSNEN. In terms of domain architecture, Helicase C-terminal spans 1363–1531; that stretch reads KLISYLRLKS…ETDNEESDDA (169 aa). Basic and acidic residues predominate over residues 1508–1518; sequence EKSKKGDKYDE. The segment covering 1519–1529 has biased composition (acidic residues); the sequence is AQDETDNEESD.

Belongs to the SNF2/RAD54 helicase family.

It is found in the nucleus. Its function is as follows. Is probably involved in a pathway contributing to genomic integrity. This is an uncharacterized protein from Saccharomyces cerevisiae (strain ATCC 204508 / S288c) (Baker's yeast).